The chain runs to 238 residues: DNA repair protein RAD59 (238 aa).

It belongs to the RAD52 family. As to quaternary structure, interacts with RAD51 and RAD52.

The protein localises to the nucleus. Its function is as follows. Involved in the repair of double-strand breaks in DNA during vegetative growth via recombination and single-strand annealing. Anneals complementary single-stranded DNA. This Saccharomyces cerevisiae (strain ATCC 204508 / S288c) (Baker's yeast) protein is DNA repair protein RAD59 (RAD59).